The primary structure comprises 371 residues: MSL complex subunit 3B (371 aa).

Disordered stretches follow at residues 1–44 and 160–229; these read MATL…READ and EERA…SPQA. Positions 8-44 are enriched in basic and acidic residues; that stretch reads PKDDGEGKDEGGSDRGDGDPKPKGKKEVEAHTRREAD. The MRG domain occupies 44 to 367; sequence DERAVRIPIP…CEAHYSSKNP (324 aa). The segment covering 206–216 has biased composition (basic residues); the sequence is APRRSTRHSTH.

The protein localises to the nucleus. In terms of biological role, probable non-catalytic component of the MSL histone acetyltransferase complex, a multiprotein complex that mediates the majority of histone H4 acetylation at 'Lys-16' (H4K16ac), an epigenetic mark that prevents chromatin compaction. The chain is MSL complex subunit 3B from Rattus norvegicus (Rat).